A 1223-amino-acid polypeptide reads, in one-letter code: MKFGKTFANHRIPEWSSQYVGYKSLKKMIKEITRLQEDIYRAHNKNSYDEGRPPTKMRDSSNSAQNYLDSPKIQKLLASFFFAVDRDIEKVDTFYNSQYAEYKKRFERLLSSNQFNEIKSTLVVDANKEDAVAQTLLTKDTREMNMLLKGTSQASRLSYHKDDLIEIQSILAELRKQFRNLKWYAELNKRAFGKILKKLDKKVGTNQQMSTMKTRILPLQFANDSLITKDLSLLKTIWEQVTFRINSYERVMRSTSPNANANDNTEFFKIICVFIEEDDSKGLIRELTNLYSELSLIPTRIMISVLNKAALSKSLACIDAILKVIPSLNDSEDINRRNFFHHHIIAIGKLIRKQEILSRKKKSQPSKYTNSEGEIVTDLRTLHTTLSAPAESDSITEEEKSSACTLSYILEELPIHLRPCLFQHDNYKRTPLHYSCQYGLSEVTKLIIKLMKEWNIWNEIPIDDVSAFGDAESLTPLHLCVLGAHPKTTEVLLQSLDPNVKLKSSSLLHLATEWNNYPLLHVLLSSKRFDINYQDNELHETPLYLACRLNFFEAAVCLLYNGADLEIREKLFGWTAIFVAAAEGFTDIVKLLIANNANFDIEDEGGWTPMEHAVLRGHLHIADMVQIRDELVTHPHSQLNSGSEEKEPLNEISAGELNERNENGNGGNKGSLGKLAGPIKSYGHRFLDNNESLILITLGSNDTRNKSPSISLSSEALAKVIGLETDCALSLVISCNDSIDKSSVILDLPLDDNVDAVDFKVPFKVDYSHTLYFDIVPTYGTRSLETHNRIDCQKNNNNYVMARGVSMLNKSYSSVGVNRSILNGSVTVPIIANHTLEILGTLKFEYIIITPFEHPQLPLERTETYWKSLVSTRVIGHRGLGKNNPNKSLQIGENTVESFIMAASLGASYVEFDVQLTKDNVPVVYHDFLVAETGVDIPMHELTLEQFLDLNNADKEHIQRGAGHSPHHVNGADTALQKYRGRSVDDSDVSTLRRAWDLHDNDPNGKSNNAHWSDNRMRLTKTFKKNNFKGNARGHSIASSFVTLKELFKKIPANVGFNIECKFPMLDEAEEEELGQIMMEMNHWVDTVLKVVFDNANGRDIIFSSFHPDICIMLSLKQPVIPILFLTEGGSEQMADLRASSLQNGIRFAKKWNLLGIVSAAAPILKAPRLVQVVKSNGLVCVTYGVDNNDPENASIQIEAGVDAVIVDSVLAIRRGLTKKNEK.

The region spanning Met-1–Lys-213 is the SPX domain. Over residues His-43–Asp-59 the composition is skewed to basic and acidic residues. Residues His-43–Ala-64 form a disordered region. ANK repeat units lie at residues Tyr-427–Ile-456, Glu-472–Leu-502, Ser-504–Tyr-533, Leu-538–Ile-567, Phe-572–Ile-601, and Gly-605–His-634. Phosphoserine is present on Ser-653. One can recognise a GP-PDE domain in the interval Thr-872–Leu-1217. 3 residues coordinate a divalent metal cation: Glu-911, Asp-913, and His-926. At Ser-983 the chain carries Phosphoserine.

This sequence belongs to the GDE1 family. The cofactor is a divalent metal cation.

The protein localises to the cytoplasm. The enzyme catalyses sn-glycerol 3-phosphocholine + H2O = sn-glycerol 3-phosphate + choline + H(+). The catalysed reaction is sn-glycero-3-phospho-1D-myo-inositol + H2O = myo-inositol + sn-glycerol 3-phosphate + H(+). Glycerophosphocholine glycerophosphodiesterase responsible for the hydrolysis of intracellular glycerophosphocholine into glycerol-phosphate and choline. The choline is used for phosphatidyl-choline synthesis. Required for utilization of glycerophosphocholine as phosphate source. May also use glycerophosphoinositol as substrate in vivo. In Saccharomyces cerevisiae (strain ATCC 204508 / S288c) (Baker's yeast), this protein is Glycerophosphocholine phosphodiesterase GDE1.